The chain runs to 815 residues: DNA topoisomerase 1 (815 aa).

Residues 3–119 form the Toprim domain; sequence KHLLIVESPA…QRIVFTEITP (117 aa). Residues Glu-9 and Asp-82 each coordinate Mg(2+). Residues 133–573 form the Topo IA-type catalytic domain; sequence ASDLVDAQQA…KFWVPFKELV (441 aa). An interaction with DNA region spans residues 167–172; it reads SAGRVQ. Tyr-308 acts as the O-(5'-phospho-DNA)-tyrosine intermediate in catalysis. The disordered stretch occupies residues 760–815; sequence GKPARKNFSTKKTATKNETRKQTTKKRTTDAKATKKVSDKPVKKQIKKRIAPNITE. Over residues 774–801 the composition is skewed to basic and acidic residues; sequence TKNETRKQTTKKRTTDAKATKKVSDKPV.

Belongs to the type IA topoisomerase family. In terms of assembly, monomer. It depends on Mg(2+) as a cofactor.

It carries out the reaction ATP-independent breakage of single-stranded DNA, followed by passage and rejoining.. Releases the supercoiling and torsional tension of DNA, which is introduced during the DNA replication and transcription, by transiently cleaving and rejoining one strand of the DNA duplex. Introduces a single-strand break via transesterification at a target site in duplex DNA. The scissile phosphodiester is attacked by the catalytic tyrosine of the enzyme, resulting in the formation of a DNA-(5'-phosphotyrosyl)-enzyme intermediate and the expulsion of a 3'-OH DNA strand. The free DNA strand then undergoes passage around the unbroken strand, thus removing DNA supercoils. Finally, in the religation step, the DNA 3'-OH attacks the covalent intermediate to expel the active-site tyrosine and restore the DNA phosphodiester backbone. This Xylella fastidiosa (strain 9a5c) protein is DNA topoisomerase 1.